We begin with the raw amino-acid sequence, 190 residues long: Xanthine phosphoribosyltransferase 2 (190 aa).

Leu20 and Asn27 together coordinate xanthine. Ala129–Ala133 contacts 5-phospho-alpha-D-ribose 1-diphosphate. Lys157 is a xanthine binding site.

It belongs to the purine/pyrimidine phosphoribosyltransferase family. Xpt subfamily. As to quaternary structure, homodimer.

It is found in the cytoplasm. The enzyme catalyses XMP + diphosphate = xanthine + 5-phospho-alpha-D-ribose 1-diphosphate. It participates in purine metabolism; XMP biosynthesis via salvage pathway; XMP from xanthine: step 1/1. Its function is as follows. Converts the preformed base xanthine, a product of nucleic acid breakdown, to xanthosine 5'-monophosphate (XMP), so it can be reused for RNA or DNA synthesis. This Clostridium botulinum (strain Langeland / NCTC 10281 / Type F) protein is Xanthine phosphoribosyltransferase 2.